The sequence spans 501 residues: Glycerol kinase (501 aa).

An ADP-binding site is contributed by Thr16. ATP is bound by residues Thr16, Thr17, and Ser18. Thr16 contributes to the sn-glycerol 3-phosphate binding site. Residue Arg20 participates in ADP binding. Residues Arg84, Glu85, Tyr135, and Asp242 each coordinate sn-glycerol 3-phosphate. The glycerol site is built by Arg84, Glu85, Tyr135, Asp242, and Gln243. Residues Thr264 and Gly307 each contribute to the ADP site. 4 residues coordinate ATP: Thr264, Gly307, Gln311, and Gly408. Gly408 is an ADP binding site.

The protein belongs to the FGGY kinase family.

It catalyses the reaction glycerol + ATP = sn-glycerol 3-phosphate + ADP + H(+). It participates in polyol metabolism; glycerol degradation via glycerol kinase pathway; sn-glycerol 3-phosphate from glycerol: step 1/1. Key enzyme in the regulation of glycerol uptake and metabolism. Catalyzes the phosphorylation of glycerol to yield sn-glycerol 3-phosphate. The sequence is that of Glycerol kinase from Saccharolobus islandicus (strain M.14.25 / Kamchatka #1) (Sulfolobus islandicus).